The primary structure comprises 977 residues: Serine/threonine-protein kinase/endoribonuclease IRE1 (977 aa).

Residues 1 to 20 (MPARWLLLLLALLLPPPGPG) form the signal peptide. Topologically, residues 21–445 (SFGRTSTVTL…EAPVDSMLKD (425 aa)) are lumenal. N178 is a glycosylation site (N-linked (GlcNAc...) asparagine). Residues 446 to 466 (MATIILSTFLLVGWVAFIITY) traverse the membrane as a helical segment. Over 467 to 977 (PLSVHQQRQL…PQPPVIPYAL (511 aa)) the chain is Cytoplasmic. The segment at 498–559 (FHPHGDLTQD…PSLEQDDEDE (62 aa)) is disordered. Positions 513 to 551 (SSGPFSESSGTSSPSPSPRASNHSLHPSSSASRAGTSPS) are enriched in low complexity. Residues 571–832 (FCPKDVLGHG…AKHVLKHPFF (262 aa)) form the Protein kinase domain. ATP-binding positions include 577–585 (LGHGAEGTI), K599, and 643–645 (ELC). D688 serves as the catalytic Proton acceptor; for protein kinase activity. ATP is bound by residues 690–693 (KPHN) and D711. Phosphoserine is present on residues S724 and S729. The region spanning 835-963 (LEKQLQFFQD…ERLFQTYYWH (129 aa)) is the KEN domain. The interval 906-907 (NK) is interacts with hydroxy-aryl-aldehyde inhibitors.

The protein belongs to the protein kinase superfamily. Ser/Thr protein kinase family. Monomer. Homodimer; disulfide-linked; homodimerization takes place in response to endoplasmic reticulum stress and promotes activation of the kinase and endoribonuclease activities. Dimer formation is driven by hydrophobic interactions within the N-terminal luminal domains and stabilized by disulfide bridges. Interacts (via the luminal region) with DNAJB9/ERdj4; interaction takes place in unstressed cells and promotes recruitment of HSPA5/BiP. Interacts (via the luminal region) with HSPA5/BiP; HSPA5/BiP is a negative regulator of the unfolded protein response (UPR) that prevents homodimerization of ERN1/IRE1 and subsequent activation of the protein. Interaction with HSPA5 also competitively inhibits ERN1 interaction with MANF. Interacts with PDIA6, a negative regulator of the UPR; the interaction is direct and disrupts homodimerization. Interacts with DAB2IP (via PH domain); the interaction occurs in a endoplasmic reticulum stress-induced dependent manner and is required for subsequent recruitment of TRAF2 to ERN1/IRE1. Interacts with TAOK3 and TRAF2. Interacts with RNF13. Interacts with LACC1. Interacts (when unphosphorylated) with DDRGK1; interaction is dependent on UFM1 and takes place in response to endoplasmic reticulum stress, regulating ERN1/IRE1-alpha stability. Interacts (via N-terminus) with P4HB/PDIA1; the interaction is enhanced by phosphorylation of P4HB by FAM20C in response to endoplasmic reticulum stress and results in attenuation of ERN1 activity. Interacts with TMBIM6; this interaction inhibits ERN1 activity. Interacts (via luminal domain) with MANF (via C-terminus); the interaction is decreased in the presence of increasing concentrations of Ca(2+). It depends on Mg(2+) as a cofactor. Post-translationally, autophosphorylated following homodimerization. Autophosphorylation promotes activation of the endoribonuclease domain. In response to ER stress, phosphorylated at Ser-724, Ser-729 and possibly Ser-726; phosphorylation promotes oligomerization and endoribonuclease activity. Dephosphorylated at Ser-724, Ser-729 and possibly Ser-726 by RPAP2 to abort failed ER-stress adaptation and trigger apoptosis. Phosphorylated at Ser-724; in response to the ER stressor tunicamycin. In terms of processing, ADP-ribosylated by PARP16 upon ER stress, which increases both kinase and endonuclease activities. In terms of tissue distribution, expressed in liver (at protein level). Ubiquitously expressed. High levels in thymus, liver and lung. In the brain, preferentially expressed in cortical, hippocampal and olfactory neurons.

It localises to the endoplasmic reticulum membrane. The catalysed reaction is L-seryl-[protein] + ATP = O-phospho-L-seryl-[protein] + ADP + H(+). The enzyme catalyses L-threonyl-[protein] + ATP = O-phospho-L-threonyl-[protein] + ADP + H(+). The kinase domain is activated by trans-autophosphorylation following homodimerization. Kinase activity is required for activation of the endoribonuclease domain. Endoribonuclease activity is specifically inhibited by hydroxy-aryl-aldehydes (HAA) MKC9989, OICR464 and OICR573. Functionally, serine/threonine-protein kinase and endoribonuclease that acts as a key sensor for the endoplasmic reticulum unfolded protein response (UPR). In unstressed cells, the endoplasmic reticulum luminal domain is maintained in its inactive monomeric state by binding to the endoplasmic reticulum chaperone HSPA5/BiP. Accumulation of misfolded protein in the endoplasmic reticulum causes release of HSPA5/BiP, allowing the luminal domain to homodimerize, promoting autophosphorylation of the kinase domain and subsequent activation of the endoribonuclease activity. The endoribonuclease activity is specific for XBP1 mRNA and excises 26 nucleotides from XBP1 mRNA. The resulting spliced transcript of XBP1 encodes a transcriptional activator protein that up-regulates expression of UPR target genes. Acts as an upstream signal for ER stress-induced GORASP2-mediated unconventional (ER/Golgi-independent) trafficking of CFTR to cell membrane by modulating the expression and localization of SEC16A. This Mus musculus (Mouse) protein is Serine/threonine-protein kinase/endoribonuclease IRE1.